Reading from the N-terminus, the 432-residue chain is Monooxygenase penA (432 aa).

The helical transmembrane segment at 7–29 threads the bilayer; that stretch reads FKIAIIGAGPAGLTLASLLTASP. N33 is a glycosylation site (N-linked (GlcNAc...) asparagine).

Belongs to the aromatic-ring hydroxylase family. Requires FAD as cofactor.

The protein resides in the membrane. Its pathway is secondary metabolite biosynthesis. The protein operates within alkaloid biosynthesis. It functions in the pathway mycotoxin biosynthesis. Monooxygenase; part of the gene cluster that mediates the biosynthesis of penigequinolones, potent insecticidal alkaloids that contain a highly modified 10-carbon prenyl group. The first stage is catalyzed by the nonribosomal peptide synthetase penN that condenses anthranilic acid and O-methyl-L-tyrosine to produce 4'-methoxycyclopeptin. 4'-methoxycyclopeptin is then converted to 4'-methoxydehydrocyclopeptin by the ketoglutarate-dependent dioxygenase penM through dehydrogenation to form a double bond between C-alpha and C-beta of the O-methyltyrosine side chain. PenM also converts its first product methoxydehydrocyclopeptin to 4'-methoxycyclopenin. The following conversion of 4'methoxycyclopenin into 4'-methoxyviridicatin is catalyzed by the cyclopenase penL. 4'-methoxyviridicatin is the precursor of quinolone natural products, and is further converted to quinolinone B. The prenyltransferase penI then catalyzes the canonical Friedel-Crafts alkylation of quinolinone B with dimethylallyl cation to yield dimethylallyl quinolone, which is subjected to FAD-dependent dehydrogenation by the FAD-linked oxidoreductase penH to yield conjugated aryl diene. The delta(3') double bond then serves as the site of the second alkylation with DMAPP catalyzed by the prenyltransferase penG to yield a carbenium ion intermediate, which can be attacked by H(2)O to yield a styrenyl quinolone containing a C3'-hydroxyprenyl chain, or undergo cyclization to yield yaequinolones J1 and J2. The conversion of the styrenyl quinolone into the tetrahydrofuran-containing yaequinolone C is performed by the FAD-dependent monooxygenase penE and involves epoxidation of the terminal C7'-C8' olefin, followed by epoxide ring opening initiated by the C3' hydroxyl group. The predicted cysteine hydrolase penJ acts as an epoxide hydrolase that enhances the rate of the 5-exo-tet cyclization step, increasing the yield of yaequinolone C. PenF catalyzes the cationic rearrangement of the epoxide formed by penE (before ring opening to produce yaequinolone C) into yaequinolone D. Finally, the short-chain dehydrogenase/reductase (SDR)-like reductase penD, catalyzes both the dehydration of yaequinolone D and the reduction of the resulting oxonium to yield penigequinolone. This Penicillium thymicola protein is Monooxygenase penA.